The primary structure comprises 158 residues: 2-C-methyl-D-erythritol 2,4-cyclodiphosphate synthase (158 aa).

Residues Asp-9 and His-11 each contribute to the a divalent metal cation site. Residues 9-11 (DVH) and 35-36 (HS) contribute to the 4-CDP-2-C-methyl-D-erythritol 2-phosphate site. An a divalent metal cation-binding site is contributed by His-43. 4-CDP-2-C-methyl-D-erythritol 2-phosphate-binding positions include 57–59 (DIG), 62–66 (FPDTD), 101–107 (AQKPKML), 133–136 (TTTE), Phe-140, and Arg-143.

This sequence belongs to the IspF family. In terms of assembly, homotrimer. It depends on a divalent metal cation as a cofactor.

The catalysed reaction is 4-CDP-2-C-methyl-D-erythritol 2-phosphate = 2-C-methyl-D-erythritol 2,4-cyclic diphosphate + CMP. It functions in the pathway isoprenoid biosynthesis; isopentenyl diphosphate biosynthesis via DXP pathway; isopentenyl diphosphate from 1-deoxy-D-xylulose 5-phosphate: step 4/6. Involved in the biosynthesis of isopentenyl diphosphate (IPP) and dimethylallyl diphosphate (DMAPP), two major building blocks of isoprenoid compounds. Catalyzes the conversion of 4-diphosphocytidyl-2-C-methyl-D-erythritol 2-phosphate (CDP-ME2P) to 2-C-methyl-D-erythritol 2,4-cyclodiphosphate (ME-CPP) with a corresponding release of cytidine 5-monophosphate (CMP). This is 2-C-methyl-D-erythritol 2,4-cyclodiphosphate synthase from Bacillus subtilis (strain 168).